Reading from the N-terminus, the 395-residue chain is 8-amino-7-oxononanoate synthase/2-amino-3-ketobutyrate coenzyme A ligase (395 aa).

Position 110 to 111 (110 to 111) interacts with pyridoxal 5'-phosphate; it reads GF. Position 135 (H135) interacts with substrate. Pyridoxal 5'-phosphate contacts are provided by residues S182, 207–210, and 239–242; these read DDAH and TLSK. At K242 the chain carries N6-(pyridoxal phosphate)lysine. Substrate is bound at residue T356.

This sequence belongs to the class-II pyridoxal-phosphate-dependent aminotransferase family. In terms of assembly, homodimer. It depends on pyridoxal 5'-phosphate as a cofactor.

The catalysed reaction is 6-carboxyhexanoyl-[ACP] + L-alanine + H(+) = (8S)-8-amino-7-oxononanoate + holo-[ACP] + CO2. It catalyses the reaction glycine + acetyl-CoA = (2S)-2-amino-3-oxobutanoate + CoA. Its pathway is cofactor biosynthesis; biotin biosynthesis. Functionally, catalyzes the decarboxylative condensation of pimeloyl-[acyl-carrier protein] and L-alanine to produce 8-amino-7-oxononanoate (AON), [acyl-carrier protein], and carbon dioxide. Can also use pimeloyl-CoA instead of pimeloyl-ACP as substrate. It also converts 2-amino-3-ketobutyrate and CoA to glycine and acetyl-CoA. Activity is also observed with the following combinations of substrates: acetyl-CoA and either L-alanine or L-serine, pimeloyl-CoA and either glycine or L-serine, and palmitoyl-CoA with L-alanine. The protein is 8-amino-7-oxononanoate synthase/2-amino-3-ketobutyrate coenzyme A ligase of Thermus thermophilus (strain ATCC 27634 / DSM 579 / HB8).